Consider the following 892-residue polypeptide: DNA mismatch repair protein MutS (892 aa).

607 to 614 (GPNMSGKS) is an ATP binding site. Residues 833–855 (EESQLSFFGAEQSSKKQDKPALD) are disordered. The span at 845-855 (SSKKQDKPALD) shows a compositional bias: basic and acidic residues.

It belongs to the DNA mismatch repair MutS family.

This protein is involved in the repair of mismatches in DNA. It is possible that it carries out the mismatch recognition step. This protein has a weak ATPase activity. The chain is DNA mismatch repair protein MutS from Bacillus anthracis (strain A0248).